A 203-amino-acid chain; its full sequence is Large ribosomal subunit protein eL15 (203 aa).

Residues 160-186 (ESRGLTSTGKRSRGLNKGHRYNKTRAG) form a disordered region. Positions 169–186 (KRSRGLNKGHRYNKTRAG) are enriched in basic residues.

Belongs to the eukaryotic ribosomal protein eL15 family. As to quaternary structure, component of the large ribosomal subunit (LSU). Mature N.crassa ribosomes consist of a small (40S) and a large (60S) subunit. The 40S small subunit contains 1 molecule of ribosomal RNA (18S rRNA) and at least 32 different proteins. The large 60S subunit contains 3 rRNA molecules (26S, 5.8S and 5S rRNA) and at least 42 different proteins.

It localises to the cytoplasm. Its function is as follows. Component of the ribosome, a large ribonucleoprotein complex responsible for the synthesis of proteins in the cell. The small ribosomal subunit (SSU) binds messenger RNAs (mRNAs) and translates the encoded message by selecting cognate aminoacyl-transfer RNA (tRNA) molecules. The large subunit (LSU) contains the ribosomal catalytic site termed the peptidyl transferase center (PTC), which catalyzes the formation of peptide bonds, thereby polymerizing the amino acids delivered by tRNAs into a polypeptide chain. The nascent polypeptides leave the ribosome through a tunnel in the LSU and interact with protein factors that function in enzymatic processing, targeting, and the membrane insertion of nascent chains at the exit of the ribosomal tunnel. This is Large ribosomal subunit protein eL15 (rpl-15) from Neurospora crassa (strain ATCC 24698 / 74-OR23-1A / CBS 708.71 / DSM 1257 / FGSC 987).